The sequence spans 461 residues: CBL-interacting protein kinase 1 (461 aa).

A Protein kinase domain is found at 19 to 274 (YEIGRTLGEG…IAGIKEHEWF (256 aa)). ATP is bound by residues 25-33 (LGEGNFGKV) and K48. The active-site Proton acceptor is the D142. Residues 160–189 (DFGLSALPQHLGNDGLLHTTCGSPNYIAPE) are activation loop. The 25-residue stretch at 308-332 (EKPTHINAFQLIGMASALDLSGFFE) folds into the NAF domain. The interval 338–367 (QRKIRFTSTHSPKDLFDKIENVVTEMGFQV) is PPI.

The protein belongs to the protein kinase superfamily. CAMK Ser/Thr protein kinase family. SNF1 subfamily. The cofactor is Mn(2+).

The enzyme catalyses L-seryl-[protein] + ATP = O-phospho-L-seryl-[protein] + ADP + H(+). It catalyses the reaction L-threonyl-[protein] + ATP = O-phospho-L-threonyl-[protein] + ADP + H(+). In terms of biological role, CIPK serine-threonine protein kinases interact with CBL proteins. Binding of a CBL protein to the regulatory NAF domain of CIPK protein lead to the activation of the kinase in a calcium-dependent manner. This Oryza sativa subsp. japonica (Rice) protein is CBL-interacting protein kinase 1 (CIPK1).